A 152-amino-acid chain; its full sequence is Anaerobic nitrite reductase HBI (152 aa).

One can recognise a Globin domain in the interval 2 to 151 (ALTEKQEALL…LVATIKAEMK (150 aa)). Residues 35 to 39 (EAAPE) carry the Homodimerization motif. Heme b contacts are provided by Ser-45, Lys-59, His-63, Arg-93, and His-98. The Homodimerization motif lies at 105 to 117 (DPHFEVMKGALLG).

Belongs to the plant globin family. In terms of assembly, homodimer. Heme b serves as cofactor. Root nodules.

It localises to the cytoplasm. It is found in the nucleus. The enzyme catalyses Fe(III)-heme b-[protein] + nitric oxide + H2O = Fe(II)-heme b-[protein] + nitrite + 2 H(+). Its function is as follows. Phytoglobin that reduces nitrite to nitric oxide (NO) under anoxic conditions (e.g. during flooding or in waterlogged soil) and upon root nodulation. Required for general plant development and during nodulation, especially for the onset of symbiosis. Monitors nitric oxide (NO) levels during early phase of the nitrogen-fixing symbiosis and buffers oxygen in functioning nodules. May not function as an oxygen storage or transport protein. Has an unusually high affinity for O(2) through a hexacoordinate heme iron because of a very low dissociation constant. In Casuarina glauca (Swamp oak), this protein is Anaerobic nitrite reductase HBI.